A 395-amino-acid chain; its full sequence is Elongation factor Tu (395 aa).

Positions Lys-10–Val-204 constitute a tr-type G domain. The interval Gly-19–Thr-26 is G1. Gly-19–Thr-26 provides a ligand contact to GTP. Thr-26 is a binding site for Mg(2+). The segment at Gly-60–Ser-64 is G2. The G3 stretch occupies residues Asp-81–Gly-84. Residues Asp-81–His-85 and Asn-136–Asp-139 each bind GTP. The segment at Asn-136 to Asp-139 is G4. A G5 region spans residues Ser-174–Leu-176.

It belongs to the TRAFAC class translation factor GTPase superfamily. Classic translation factor GTPase family. EF-Tu/EF-1A subfamily. In terms of assembly, monomer.

It localises to the cytoplasm. The catalysed reaction is GTP + H2O = GDP + phosphate + H(+). Functionally, GTP hydrolase that promotes the GTP-dependent binding of aminoacyl-tRNA to the A-site of ribosomes during protein biosynthesis. This is Elongation factor Tu from Rickettsia akari (strain Hartford).